A 472-amino-acid chain; its full sequence is Glutamyl-tRNA(Gln) amidotransferase subunit A (472 aa).

Residues K69 and S144 each act as charge relay system in the active site. Catalysis depends on S168, which acts as the Acyl-ester intermediate.

It belongs to the amidase family. GatA subfamily. As to quaternary structure, heterotrimer of A, B and C subunits.

It carries out the reaction L-glutamyl-tRNA(Gln) + L-glutamine + ATP + H2O = L-glutaminyl-tRNA(Gln) + L-glutamate + ADP + phosphate + H(+). In terms of biological role, allows the formation of correctly charged Gln-tRNA(Gln) through the transamidation of misacylated Glu-tRNA(Gln) in organisms which lack glutaminyl-tRNA synthetase. The reaction takes place in the presence of glutamine and ATP through an activated gamma-phospho-Glu-tRNA(Gln). In Sulfurisphaera tokodaii (strain DSM 16993 / JCM 10545 / NBRC 100140 / 7) (Sulfolobus tokodaii), this protein is Glutamyl-tRNA(Gln) amidotransferase subunit A.